Consider the following 721-residue polypeptide: Polyphosphate kinase (721 aa).

Asn47 contributes to the ATP binding site. Residues Arg377 and Arg407 each coordinate Mg(2+). His437 acts as the Phosphohistidine intermediate in catalysis. ATP-binding residues include Tyr471, Arg567, and His595.

It belongs to the polyphosphate kinase 1 (PPK1) family. It depends on Mg(2+) as a cofactor. An intermediate of this reaction is the autophosphorylated ppk in which a phosphate is covalently linked to a histidine residue through a N-P bond.

The catalysed reaction is [phosphate](n) + ATP = [phosphate](n+1) + ADP. Catalyzes the reversible transfer of the terminal phosphate of ATP to form a long-chain polyphosphate (polyP). The protein is Polyphosphate kinase of Exiguobacterium sp. (strain ATCC BAA-1283 / AT1b).